A 118-amino-acid polypeptide reads, in one-letter code: MDPRLRAPIFLPILTPETLQKKKQIKGNKTTIYKNGFMLFRSRLHKILNLSGDWAGASAKCSIIWHTLPQNVRLAWSQLAELSHYQDVRRQIAKLERILYSKRLNGHNNYKLHISRVQ.

The HMG box DNA-binding region spans 29–97; it reads KTTIYKNGFM…VRRQIAKLER (69 aa).

Its subcellular location is the nucleus. Its function is as follows. Mating type proteins are sequence specific DNA-binding proteins that act as master switches in yeast differentiation by controlling gene expression in a cell type-specific fashion. Required for conjugation and efficient meiosis. The sequence is that of Mating-type P-specific polypeptide Pc (mat2-Pc) from Schizosaccharomyces pombe (Fission yeast).